A 248-amino-acid polypeptide reads, in one-letter code: Aquaporin TIP2-3 (248 aa).

Helical transmembrane passes span 20–40 and 54–74; these read AYVA…GSAI and AGLV…VSMA. Residues 83 to 85 carry the NPA 1 motif; that stretch reads NPA. 3 helical membrane-spanning segments follow: residues 97–119, 141–161, and 168–188; these read TILT…CFLL, GVVM…ATAA, and LGTI…LAAG. An NPA 2 motif is present at residues 196–198; it reads NPA. A helical transmembrane segment spans residues 217-237; the sequence is WVGPLVGGGLAGLVYGDVFIA.

Belongs to the MIP/aquaporin (TC 1.A.8) family. TIP (TC 1.A.8.10) subfamily. In terms of tissue distribution, specifically expressed in roots.

Its subcellular location is the cell membrane. Functionally, water channel required to facilitate the transport of water across cell membrane. The chain is Aquaporin TIP2-3 (TIP2-3) from Zea mays (Maize).